The chain runs to 716 residues: DNA ligase (716 aa).

Residues 50 to 54 (DAEYD), 99 to 100 (SL), and glutamate 132 each bind NAD(+). Lysine 134 (N6-AMP-lysine intermediate) is an active-site residue. Positions 155, 192, 308, and 332 each coordinate NAD(+). The Zn(2+) site is built by cysteine 437, cysteine 439, cysteine 461, and cysteine 467. The 79-residue stretch at 638 to 716 (KSNSAVAGKT…EDEWLKLIGE (79 aa)) folds into the BRCT domain.

This sequence belongs to the NAD-dependent DNA ligase family. LigA subfamily. The cofactor is Mg(2+). Mn(2+) is required as a cofactor.

The catalysed reaction is NAD(+) + (deoxyribonucleotide)n-3'-hydroxyl + 5'-phospho-(deoxyribonucleotide)m = (deoxyribonucleotide)n+m + AMP + beta-nicotinamide D-nucleotide.. In terms of biological role, DNA ligase that catalyzes the formation of phosphodiester linkages between 5'-phosphoryl and 3'-hydroxyl groups in double-stranded DNA using NAD as a coenzyme and as the energy source for the reaction. It is essential for DNA replication and repair of damaged DNA. This chain is DNA ligase, found in Bradyrhizobium diazoefficiens (strain JCM 10833 / BCRC 13528 / IAM 13628 / NBRC 14792 / USDA 110).